A 610-amino-acid chain; its full sequence is Myoneurin (610 aa).

A BTB domain is found at 24 to 89; sequence CDCTIVIGEF…IYTGTLNLDS (66 aa). The disordered stretch occupies residues 169–197; that stretch reads QGALAKKSSQTKKKKKAFNSPKTGQNKTV. 2 consecutive short sequence motifs (nuclear localization signal) follow at residues 174–190 and 257–262; these read KKSS…NSPK and KRKRGK. Over residues 188–197 the composition is skewed to polar residues; the sequence is SPKTGQNKTV. Position 289 is a phosphoserine (Ser289). C2H2-type zinc fingers lie at residues 302-324, 330-352, 358-381, 387-409, 415-437, 443-465, 471-493, and 499-522; these read PMCN…MRIH, YVCH…VRTH, YKCE…RMHH, YKCD…ARKH, YVCD…VRRH, YVCD…SRKH, YICG…FRSH, and FICE…TKVH. The segment at 521–556 is disordered; that stretch reads VHSGADKTLDSSAEDHTLSEQDSIQKSPLSETMDVK. The segment covering 523–539 has biased composition (basic and acidic residues); the sequence is SGADKTLDSSAEDHTLS. Positions 540–550 are enriched in polar residues; the sequence is EQDSIQKSPLS.

Belongs to the krueppel C2H2-type zinc-finger protein family. In terms of tissue distribution, mainly expressed in the neuromuscular system. Located in and around synaptic myonuclei in adult muscle. Expression is dysregulated after nerve injury. Also found in the testis, ovary and placenta.

The protein localises to the nucleus. This chain is Myoneurin (MYNN), found in Homo sapiens (Human).